Consider the following 99-residue polypeptide: MAKGNLNLQDLFLNQLRKEKVNVTIFLLSGFQLKGVIKGFDNFTLVVETENNKQQLIYKHAISSILPSKPINYMAQVQNSQVQNTASQQSNNNQNQESK.

A Sm domain is found at 10 to 71 (DLFLNQLRKE…ISSILPSKPI (62 aa)). The disordered stretch occupies residues 77 to 99 (VQNSQVQNTASQQSNNNQNQESK).

It belongs to the Hfq family. In terms of assembly, homohexamer.

Functionally, RNA chaperone that binds small regulatory RNA (sRNAs) and mRNAs to facilitate mRNA translational regulation in response to envelope stress, environmental stress and changes in metabolite concentrations. Also binds with high specificity to tRNAs. The protein is RNA-binding protein Hfq of Caldicellulosiruptor saccharolyticus (strain ATCC 43494 / DSM 8903 / Tp8T 6331).